The sequence spans 193 residues: Ion-translocating oxidoreductase complex subunit A (193 aa).

The next 6 helical transmembrane spans lie at 5–25 (LLLF…FLGL), 39–59 (MGMG…AWLI), 63–83 (ILIP…VIAV), 102–122 (LLGI…VALL), 134–154 (ALYG…FAAI), and 171–191 (AIAL…SGLV).

It belongs to the NqrDE/RnfAE family. In terms of assembly, the complex is composed of six subunits: RsxA, RsxB, RsxC, RsxD, RsxE and RsxG.

It is found in the cell inner membrane. Functionally, part of a membrane-bound complex that couples electron transfer with translocation of ions across the membrane. Required to maintain the reduced state of SoxR. This is Ion-translocating oxidoreductase complex subunit A from Escherichia fergusonii (strain ATCC 35469 / DSM 13698 / CCUG 18766 / IAM 14443 / JCM 21226 / LMG 7866 / NBRC 102419 / NCTC 12128 / CDC 0568-73).